Reading from the N-terminus, the 255-residue chain is Protein DAL82 (255 aa).

A disordered region spans residues 87–149 (PEHPRPRTKF…SQPLPLDSIT (63 aa)). Residues 128 to 138 (PNNHSSDDEHS) are compositionally biased toward basic and acidic residues.

In terms of biological role, positive regulator of allophanate-induced genes in S.cerevisiae. This is Protein DAL82 (DAL82) from Saccharomyces cerevisiae (strain ATCC 204508 / S288c) (Baker's yeast).